Here is a 213-residue protein sequence, read N- to C-terminus: Pyridoxine/pyridoxamine 5'-phosphate oxidase (213 aa).

Substrate contacts are provided by residues 8-11 (RREY) and Lys66. Residues 61 to 66 (RIVLLK), 76 to 77 (YT), Arg82, Lys83, and Gln105 each bind FMN. Substrate is bound by residues Tyr123, Arg127, and Ser131. Residues 140-141 (QS) and Trp185 each bind FMN. Residue 191–193 (RLH) coordinates substrate. Position 195 (Arg195) interacts with FMN.

This sequence belongs to the pyridoxamine 5'-phosphate oxidase family. As to quaternary structure, homodimer. Requires FMN as cofactor.

It carries out the reaction pyridoxamine 5'-phosphate + O2 + H2O = pyridoxal 5'-phosphate + H2O2 + NH4(+). The enzyme catalyses pyridoxine 5'-phosphate + O2 = pyridoxal 5'-phosphate + H2O2. Its pathway is cofactor metabolism; pyridoxal 5'-phosphate salvage; pyridoxal 5'-phosphate from pyridoxamine 5'-phosphate: step 1/1. It participates in cofactor metabolism; pyridoxal 5'-phosphate salvage; pyridoxal 5'-phosphate from pyridoxine 5'-phosphate: step 1/1. Catalyzes the oxidation of either pyridoxine 5'-phosphate (PNP) or pyridoxamine 5'-phosphate (PMP) into pyridoxal 5'-phosphate (PLP). This Pseudoalteromonas atlantica (strain T6c / ATCC BAA-1087) protein is Pyridoxine/pyridoxamine 5'-phosphate oxidase.